The following is a 364-amino-acid chain: tRNA-specific 2-thiouridylase MnmA 2 (364 aa).

ATP is bound by residues 10–17 and Met-36; that span reads GMSGGVDS. The Nucleophile role is filled by Cys-106. Cysteines 106 and 204 form a disulfide. Position 130 (Gly-130) interacts with ATP. An interaction with tRNA region spans residues 154–156; it reads KDQ. Residue Cys-204 is the Cysteine persulfide intermediate of the active site. The interval 310–311 is interaction with tRNA; it reads RY.

The protein belongs to the MnmA/TRMU family.

It is found in the cytoplasm. The enzyme catalyses S-sulfanyl-L-cysteinyl-[protein] + uridine(34) in tRNA + AH2 + ATP = 2-thiouridine(34) in tRNA + L-cysteinyl-[protein] + A + AMP + diphosphate + H(+). In terms of biological role, catalyzes the 2-thiolation of uridine at the wobble position (U34) of tRNA, leading to the formation of s(2)U34. This chain is tRNA-specific 2-thiouridylase MnmA 2, found in Caldanaerobacter subterraneus subsp. tengcongensis (strain DSM 15242 / JCM 11007 / NBRC 100824 / MB4) (Thermoanaerobacter tengcongensis).